The primary structure comprises 198 residues: GTP cyclohydrolase 1 (198 aa).

3 residues coordinate Zn(2+): Cys-87, His-90, and Cys-158.

This sequence belongs to the GTP cyclohydrolase I family. In terms of assembly, homomer.

The catalysed reaction is GTP + H2O = 7,8-dihydroneopterin 3'-triphosphate + formate + H(+). It participates in cofactor biosynthesis; 7,8-dihydroneopterin triphosphate biosynthesis; 7,8-dihydroneopterin triphosphate from GTP: step 1/1. In Janthinobacterium sp. (strain Marseille) (Minibacterium massiliensis), this protein is GTP cyclohydrolase 1.